The chain runs to 71 residues: Translational regulator CsrA (71 aa).

It belongs to the CsrA/RsmA family. Homodimer; the beta-strands of each monomer intercalate to form a hydrophobic core, while the alpha-helices form wings that extend away from the core.

It localises to the cytoplasm. A translational regulator that binds mRNA to regulate translation initiation and/or mRNA stability. Usually binds in the 5'-UTR at or near the Shine-Dalgarno sequence preventing ribosome-binding, thus repressing translation. Its main target seems to be the major flagellin gene, while its function is anatagonized by FliW. The protein is Translational regulator CsrA of Clostridium botulinum (strain Alaska E43 / Type E3).